A 706-amino-acid polypeptide reads, in one-letter code: Glycine--tRNA ligase beta subunit (706 aa).

The protein belongs to the class-II aminoacyl-tRNA synthetase family. In terms of assembly, tetramer of two alpha and two beta subunits.

It localises to the cytoplasm. It carries out the reaction tRNA(Gly) + glycine + ATP = glycyl-tRNA(Gly) + AMP + diphosphate. The sequence is that of Glycine--tRNA ligase beta subunit from Acidobacterium capsulatum (strain ATCC 51196 / DSM 11244 / BCRC 80197 / JCM 7670 / NBRC 15755 / NCIMB 13165 / 161).